Here is a 232-residue protein sequence, read N- to C-terminus: Putative homeobox protein NANOG2 (232 aa).

The disordered stretch occupies residues 1–39; it reads MDLPIQDSHDSSTSPKGKQPTTAEKSATKKEDKVPVKKQ. Positions 11 to 25 are enriched in polar residues; the sequence is SSTSPKGKQPTTAEK. The span at 26–35 shows a compositional bias: basic and acidic residues; the sequence is SATKKEDKVP. 8 repeat units span residues 123–127, 128–132, 133–137, 143–147, 148–152, 153–157, 158–162, and 163–167. The tract at residues 123 to 167 is 8 X repeats starting with a Trp in each unit; that stretch reads WSNQTWNNSTWSNQTQNIQSWSNHSWNTQTWCTQSWNNQAWNSPF. The segment at 123–167 is sufficient for transactivation activity; it reads WSNQTWNNSTWSNQTQNIQSWSNHSWNTQTWCTQSWNNQAWNSPF. The segment at 168-232 is sufficient for strong transactivation activity; the sequence is YNCGEESLQS…YSMNMQPEDV (65 aa).

It belongs to the Nanog homeobox family.

The protein localises to the nucleus. Functionally, probable transcriptional regulator. The sequence is that of Putative homeobox protein NANOG2 (NANOGP1) from Homo sapiens (Human).